The primary structure comprises 330 residues: Thioredoxin domain-containing protein 6 (330 aa).

In terms of domain architecture, Thioredoxin spans 11 to 115 (QVNISTQELW…QKTILDQLEA (105 aa)). The tract at residues 157–303 (ERTCTLAIIK…LFPSLKFSDK (147 aa)) is NDK. The interval 300 to 330 (FSDKDTEAPQGGEAEATAGPTEALCFPEDVD) is disordered. Residues 307–322 (APQGGEAEATAGPTEA) are compositionally biased toward low complexity.

Belongs to the NDK family. In terms of assembly, monomer and homodimer. Detected at very low levels in testis, lung and brain.

The protein resides in the cytoplasm. It is found in the cytoskeleton. Its subcellular location is the cilium axoneme. It localises to the dynein axonemal particle. Its function is as follows. May be a regulator of microtubule physiology. The polypeptide is Thioredoxin domain-containing protein 6 (Homo sapiens (Human)).